Here is a 404-residue protein sequence, read N- to C-terminus: Probable tRNA sulfurtransferase (404 aa).

The THUMP domain occupies 60–165 (QPVVEALKLV…DEAAYISYEE (106 aa)). Residues 183–184 (ML), 208–209 (HF), Arg265, Gly287, and Gln296 each bind ATP.

The protein belongs to the ThiI family.

Its subcellular location is the cytoplasm. It catalyses the reaction [ThiI sulfur-carrier protein]-S-sulfanyl-L-cysteine + a uridine in tRNA + 2 reduced [2Fe-2S]-[ferredoxin] + ATP + H(+) = [ThiI sulfur-carrier protein]-L-cysteine + a 4-thiouridine in tRNA + 2 oxidized [2Fe-2S]-[ferredoxin] + AMP + diphosphate. The catalysed reaction is [ThiS sulfur-carrier protein]-C-terminal Gly-Gly-AMP + S-sulfanyl-L-cysteinyl-[cysteine desulfurase] + AH2 = [ThiS sulfur-carrier protein]-C-terminal-Gly-aminoethanethioate + L-cysteinyl-[cysteine desulfurase] + A + AMP + 2 H(+). The protein operates within cofactor biosynthesis; thiamine diphosphate biosynthesis. In terms of biological role, catalyzes the ATP-dependent transfer of a sulfur to tRNA to produce 4-thiouridine in position 8 of tRNAs, which functions as a near-UV photosensor. Also catalyzes the transfer of sulfur to the sulfur carrier protein ThiS, forming ThiS-thiocarboxylate. This is a step in the synthesis of thiazole, in the thiamine biosynthesis pathway. The sulfur is donated as persulfide by IscS. This is Probable tRNA sulfurtransferase from Streptococcus pyogenes serotype M5 (strain Manfredo).